We begin with the raw amino-acid sequence, 106 residues long: 3-phenylpropionate/cinnamic acid dioxygenase ferredoxin subunit (106 aa).

One can recognise a Rieske domain in the interval 4-99; it reads IYACPVADVP…VHVEGGDIFI (96 aa). [2Fe-2S] cluster-binding residues include Cys-42, His-44, Cys-62, and His-65.

The protein belongs to the bacterial ring-hydroxylating dioxygenase ferredoxin component family. As to quaternary structure, this dioxygenase system consists of four proteins: the two subunits of the hydroxylase component (HcaE and HcaF), a ferredoxin (HcaC) and a ferredoxin reductase (HcaD). [2Fe-2S] cluster is required as a cofactor.

Its pathway is aromatic compound metabolism; 3-phenylpropanoate degradation. Part of the multicomponent 3-phenylpropionate dioxygenase, that converts 3-phenylpropionic acid (PP) and cinnamic acid (CI) into 3-phenylpropionate-dihydrodiol (PP-dihydrodiol) and cinnamic acid-dihydrodiol (CI-dihydrodiol), respectively. This protein seems to be a 2Fe-2S ferredoxin. This is 3-phenylpropionate/cinnamic acid dioxygenase ferredoxin subunit from Escherichia coli O139:H28 (strain E24377A / ETEC).